A 432-amino-acid polypeptide reads, in one-letter code: MGNNVVVLGTQWGDEGKGKIVDLLTERAKYVVRYQGGHNAGHTLVINGEKTVLHLIPSGILRENVTSIIGNGVVLSPAALMKEMKELEDRGIPVRERLLLSEACPLILDYHVALDNAREKARGAKAIGTTGRGIGPAYEDKVARRGLRVGDLFDKETFAEKLKEVMEYHNFQLVNYYKAEAVDYQKVLDDTMAVADILTSMVVDVSDLLDQARQRGDFVMFEGAQGTLLDIDHGTYPYVTSSNTTAGGVATGSGLGPRYVDYVLGILKAYSTRVGAGPFPTELFDETGEFLCKQGNEFGATTGRRRRTGWLDTVAVRRAVQLNSLSGFCLTKLDVLDGLKEVKLCVAYRMPDGREVTTTPLAADDWKGVEPIYETMPGWSESTFGVKDRSGLPQAALNYIKRIEELTGVPIDIISTGPDRTETMILRDPFDA.

GTP-binding positions include G13–K19 and G41–T43. The active-site Proton acceptor is the D14. Residues D14 and G41 each coordinate Mg(2+). Residues D14–K17, N39–H42, T130, R144, Q225, T240, and R304 contribute to the IMP site. Residue H42 is the Proton donor of the active site. A substrate-binding site is contributed by A300–R306. GTP contacts are provided by residues R306, K332–D334, and S415–G417.

It belongs to the adenylosuccinate synthetase family. Homodimer. Mg(2+) serves as cofactor.

The protein localises to the cytoplasm. The catalysed reaction is IMP + L-aspartate + GTP = N(6)-(1,2-dicarboxyethyl)-AMP + GDP + phosphate + 2 H(+). It participates in purine metabolism; AMP biosynthesis via de novo pathway; AMP from IMP: step 1/2. Its function is as follows. Plays an important role in the de novo pathway of purine nucleotide biosynthesis. Catalyzes the first committed step in the biosynthesis of AMP from IMP. The protein is Adenylosuccinate synthetase of Escherichia coli (strain K12).